The chain runs to 746 residues: MEHTYQYSWIIPFIPLPVPILLGIGLLLFPTVTKSLRRMWTFLSIFLLSIVMIFSVYLSIQQIFLSCIHQNVWSWTINNEFSFEFGYFIDPLTSIMLILITTVGILVLIYSDNYMAHDQGYLRFFAYLGFFTTSMLGLVTSSNLIQVYFFWELVGMCSYLLIGFWFTRPIAANACQKAFVTNRVGDFGLLLGILGLYWITGSFEFQDLFEIVNNLILNNRVNLLFLTLCAFLLFVGPIAKSAQFPLHVWLPDAMEGPTPISALIHAATMVAAGIFLVARLLPLFIVIPSIMYIISLIGIITVLLGATLALAQKDIKRGLAYSTMSQLGYMMLALGMGSYRPALFHLITHAYSKALLFLGSGSIIHSMEAIVGYSPDKSQNMILMGGLTKHVPITKTAFLIGTLSLCGIPPLAWFWSKDEILNDSLLFSPIFAIIACSTAGLTAFYMFRIYLLTFEGHLNTYFINYSGKKSSSFYSISLWGKAEEKKLNRNFELVPLLTMNNTKRVSFFGKKTYKISNNVTNQTFITVENFGLNTRTFYYPQESDNTILFPMLVLLLFTLFVGTIGIPFNQEGLDFDILSKLLTPSINLLHKNSQNFVDWYEFLQNATFSVSIALFGIFIAYCLYKPFYSSLLNLTLLNSFKTWSSKRIRWEKLINLVYNWSYNRGYIDAFFKTSLTENIRRLAKQMNFFDKRIIDGITNGVGITSFFVGEVTKYISGSRISFYLFLYLSYVFIFLMILFFFYFEKF.

Transmembrane regions (helical) follow at residues 9 to 29 (WIIP…LLLF), 40 to 60 (WTFL…YLSI), 89 to 109 (IDPL…LVLI), 125 to 145 (FAYL…SNLI), 147 to 167 (VYFF…FWFT), 185 to 205 (GDFG…SFEF), 221 to 241 (VNLL…IAKS), 258 to 278 (TPIS…FLVA), 280 to 300 (LLPL…IGII), 327 to 347 (LGYM…FHLI), 354 to 374 (ALLF…VGYS), 396 to 416 (TAFL…WFWS), 425 to 445 (LLFS…TAFY), 547 to 567 (ILFP…IGIP), 608 to 628 (FSVS…KPFY), and 722 to 742 (FYLF…FFFY).

This sequence belongs to the complex I subunit 5 family. NDH is composed of at least 16 different subunits, 5 of which are encoded in the nucleus.

The protein localises to the plastid. It localises to the chloroplast thylakoid membrane. It carries out the reaction a plastoquinone + NADH + (n+1) H(+)(in) = a plastoquinol + NAD(+) + n H(+)(out). The catalysed reaction is a plastoquinone + NADPH + (n+1) H(+)(in) = a plastoquinol + NADP(+) + n H(+)(out). Functionally, NDH shuttles electrons from NAD(P)H:plastoquinone, via FMN and iron-sulfur (Fe-S) centers, to quinones in the photosynthetic chain and possibly in a chloroplast respiratory chain. The immediate electron acceptor for the enzyme in this species is believed to be plastoquinone. Couples the redox reaction to proton translocation, and thus conserves the redox energy in a proton gradient. This chain is NAD(P)H-quinone oxidoreductase subunit 5, chloroplastic (ndhF), found in Draba nemorosa (Woodland whitlowgrass).